A 489-amino-acid chain; its full sequence is Pup--protein ligase (489 aa).

A Mg(2+)-binding site is contributed by E25. Position 69 (R69) interacts with ATP. Residue Y71 coordinates Mg(2+). The active-site Proton acceptor is the D73. Mg(2+) is bound at residue E79. Residues T82 and W447 each coordinate ATP.

Belongs to the Pup ligase/Pup deamidase family. Pup-conjugating enzyme subfamily.

It catalyses the reaction ATP + [prokaryotic ubiquitin-like protein]-L-glutamate + [protein]-L-lysine = ADP + phosphate + N(6)-([prokaryotic ubiquitin-like protein]-gamma-L-glutamyl)-[protein]-L-lysine.. It participates in protein degradation; proteasomal Pup-dependent pathway. Its pathway is protein modification; protein pupylation. Catalyzes the covalent attachment of the prokaryotic ubiquitin-like protein modifier Pup to the proteasomal substrate proteins, thereby targeting them for proteasomal degradation. This tagging system is termed pupylation. The ligation reaction involves the side-chain carboxylate of the C-terminal glutamate of Pup and the side-chain amino group of a substrate lysine. This Corynebacterium efficiens (strain DSM 44549 / YS-314 / AJ 12310 / JCM 11189 / NBRC 100395) protein is Pup--protein ligase.